The sequence spans 399 residues: MSEYLFTSESVSEGHPDKVADQISDSILDAILAQDPNARVACETLCSTGLIVMSGEITTQANVDYMQVARAAVKRIGYNSSDIGFDYNTCAVLTAFNKQSPDIARGVNRTKEEEMDQGAGDQGLMFGYACDETPQLMPMPIYYAHRLMERQAELRKDGRLPWLRPDAKSQVSVRYLDGKPQRIETVVISTQHHPDISHTDLSEAIIEEVIKPVLPKKMLSGETRYLINPTGRFVVGGPMGDCGLTGRKIIVDSYGGTAHHGGGAFSGKDPSKVDRSAAYAGRYVAKNLVAAGIASRCEVQMAYAIGVARPVSLMVDTFGTGKIPDDKIVKLIERHFDLRPRGIIHGLDLLRPIYEKTAAYGHFGRDEPEFSWESTDKAAQLREEAGIEPAETEPLSLQA.

Residue histidine 15 participates in ATP binding. Aspartate 17 is a binding site for Mg(2+). Position 43 (glutamate 43) interacts with K(+). Glutamate 56 and glutamine 99 together coordinate L-methionine. Positions 99–109 (QSPDIARGVNR) are flexible loop. ATP-binding positions include 166–168 (DAK), 232–233 (RF), aspartate 241, 247–248 (RK), alanine 264, and lysine 268. L-methionine is bound at residue aspartate 241. Lysine 272 serves as a coordination point for L-methionine.

The protein belongs to the AdoMet synthase family. In terms of assembly, homotetramer; dimer of dimers. Mg(2+) serves as cofactor. K(+) is required as a cofactor.

It is found in the cytoplasm. The enzyme catalyses L-methionine + ATP + H2O = S-adenosyl-L-methionine + phosphate + diphosphate. It functions in the pathway amino-acid biosynthesis; S-adenosyl-L-methionine biosynthesis; S-adenosyl-L-methionine from L-methionine: step 1/1. Catalyzes the formation of S-adenosylmethionine (AdoMet) from methionine and ATP. The overall synthetic reaction is composed of two sequential steps, AdoMet formation and the subsequent tripolyphosphate hydrolysis which occurs prior to release of AdoMet from the enzyme. The sequence is that of S-adenosylmethionine synthase from Nitrosospira multiformis (strain ATCC 25196 / NCIMB 11849 / C 71).